Consider the following 112-residue polypeptide: MHELSLATALVETALWQAVQAEAQQIVSLKLRLGTWAGVDAEALRFAFSLVQQDTIAASAQLVIESVPAQFRCQTCGQQTPPPLLAACSHCGSDRWQLQQGRELQLQSMEVV.

H2 provides a ligand contact to Ni(2+). Positions 73, 76, 88, and 91 each coordinate Zn(2+).

It belongs to the HypA/HybF family.

Functionally, involved in the maturation of [NiFe] hydrogenases. Required for nickel insertion into the metal center of the hydrogenase. In Synechococcus elongatus (strain ATCC 33912 / PCC 7942 / FACHB-805) (Anacystis nidulans R2), this protein is Hydrogenase maturation factor HypA.